Reading from the N-terminus, the 148-residue chain is Putative transmembrane protein ORF23 (148 aa).

Residues 1–18 form the signal peptide; sequence MVIILLGVSIVVPGLFLA. Residues 19-118 are Extracellular-facing; the sequence is TETPQTNTFE…YVGWPSGAET (100 aa). The chain crosses the membrane as a helical span at residues 119-139; that stretch reads IITNIADIIIMATAVMIIGAI. Topologically, residues 140–148 are cytoplasmic; sequence YTGYKVSIK.

The protein localises to the host membrane. In His1 virus (isolate Australia/Victoria) (His1V), this protein is Putative transmembrane protein ORF23.